Here is a 47-residue protein sequence, read N- to C-terminus: Delta-actitoxin-Aspp1b (47 aa).

Intrachain disulfides connect C4–C44, C6–C34, and C27–C45.

Belongs to the sea anemone sodium channel inhibitory toxin family. Type I subfamily.

It localises to the secreted. Its subcellular location is the nematocyst. Binds specifically to voltage-gated sodium channels (Nav), thereby delaying their inactivation during signal transduction. Has a longer mammalian heart stimulation effect than Hk2a, Hk8a and Hk16a. This Anthopleura sp. (strain 'Zhanjiang') (Sea anemone) protein is Delta-actitoxin-Aspp1b.